A 139-amino-acid chain; its full sequence is Ribosome-binding factor A (139 aa).

The disordered stretch occupies residues 112–139 (EARTQGQAAPAPDVEPAPGAAPDDEAEE). Low complexity predominate over residues 119 to 132 (AAPAPDVEPAPGAA).

Belongs to the RbfA family. As to quaternary structure, monomer. Binds 30S ribosomal subunits, but not 50S ribosomal subunits or 70S ribosomes.

It is found in the cytoplasm. Its function is as follows. One of several proteins that assist in the late maturation steps of the functional core of the 30S ribosomal subunit. Associates with free 30S ribosomal subunits (but not with 30S subunits that are part of 70S ribosomes or polysomes). Required for efficient processing of 16S rRNA. May interact with the 5'-terminal helix region of 16S rRNA. In Anaeromyxobacter dehalogenans (strain 2CP-1 / ATCC BAA-258), this protein is Ribosome-binding factor A.